A 602-amino-acid polypeptide reads, in one-letter code: Cytokine-like nuclear factor N-PAC (602 aa).

A phosphoserine mark is found at S8 and S10. Positions 22–81 (PKDLIWAKMKGFTPWPGMIVDPPLDLLSQQRRANTKCVFFFGSRNFAWIEENNIKPFEGP) constitute a PWWP domain. A disordered region spans residues 162-262 (GSPDEGDGLD…ASSTPTGRRR (101 aa)). Polar residues-rich tracts occupy residues 176 to 188 (ADSS…SPAV), 204 to 217 (AATS…SAKS), and 224 to 233 (SAQQSPSGPS). S224, S228, and S243 each carry phosphoserine. The tract at residues 309 to 602 (RDIVPSEQTF…SSAVFVRSRF (294 aa)) is dehydrogenase domain. NAD(+) is bound by residues 319–333 (GFLG…IVKD), T411, and R554.

Belongs to the HIBADH-related family. NP60 subfamily. In terms of assembly, binds to mononucleosomes. Interacts with male-specific lethal (MSL) histone acetyltransferase complex at least composed of mof, msl-1, msl-2 and msl-3.

It localises to the chromosome. Functionally, nucleosome-destabilizing factor that is recruited to genes during transcriptional activation and colocalizes with a subset of trimethylated 'Lys-36' histone H3 (H3K36me3)-enriched regions. Binds DNA (in vitro). Facilitates Pol II transcription through nucleosomes. Facilitates male-specific lethal (MSL) histone acetyltransferase complex targeting to active genes on the X chromosome. Stimulates the acetylation of 'Lys-56' of nucleosomal histone H3 (H3K56ac) by nej. May have oxidoreductase activity. In Drosophila melanogaster (Fruit fly), this protein is Cytokine-like nuclear factor N-PAC.